A 1237-amino-acid polypeptide reads, in one-letter code: U3 small nucleolar RNA-associated protein 22 (1237 aa).

Residues 1–78 are disordered; the sequence is MATSVKRKAS…TNTAATRHNG (78 aa). Residues S10 and S58 each carry the phosphoserine modification. T60 carries the post-translational modification Phosphothreonine. Residues 61–78 are compositionally biased toward polar residues; it reads SPESNEVATNTAATRHNG. S64 is subject to Phosphoserine.

The protein belongs to the NRAP family. As to quaternary structure, interacts with snoRNA U3. Interacts with MPP10. Component of the ribosomal small subunit (SSU) processome composed of at least 40 protein subunits and snoRNA U3. Interacts with UBP10.

The protein localises to the nucleus. The protein resides in the nucleolus. Involved in nucleolar processing of pre-18S ribosomal RNA and ribosome assembly. This is U3 small nucleolar RNA-associated protein 22 (UTP22) from Saccharomyces cerevisiae (strain ATCC 204508 / S288c) (Baker's yeast).